The primary structure comprises 216 residues: MPLYVIDKPLTLHILTQLRDKNTDQINFRKNLVRLGRILGYEIANTLDYEIVEVETPLGARTKGIDITDLNNIVIINILRAAVPLVEGLLKAFPKARQGVIGASRVEVDGKEVPKDMDVYIYYKKIPNIRAKVDNVIIADPMIATASTMLKVLEEVVRASPKRIYIVSIISSEYGANKILSKYPFIYLFTVTIDPELNNKGYILPGLGDAGDRAFG.

30-34 is a GTP binding site; it reads KNLVR. Residues arginine 80, arginine 105, and 140-148 each bind 5-phospho-alpha-D-ribose 1-diphosphate; that span reads DPMIATAST. Residues isoleucine 203 and 208 to 210 each bind uracil; that span reads GDA. Aspartate 209 contributes to the 5-phospho-alpha-D-ribose 1-diphosphate binding site.

The protein belongs to the UPRTase family. Requires Mg(2+) as cofactor.

It catalyses the reaction UMP + diphosphate = 5-phospho-alpha-D-ribose 1-diphosphate + uracil. The protein operates within pyrimidine metabolism; UMP biosynthesis via salvage pathway; UMP from uracil: step 1/1. Its activity is regulated as follows. Allosterically activated by GTP. Its function is as follows. Catalyzes the conversion of uracil and 5-phospho-alpha-D-ribose 1-diphosphate (PRPP) to UMP and diphosphate. The sequence is that of Uracil phosphoribosyltransferase from Saccharolobus islandicus (strain M.16.4 / Kamchatka #3) (Sulfolobus islandicus).